A 75-amino-acid polypeptide reads, in one-letter code: Probable protein BRICK1-A (75 aa).

Positions 41–72 (MSCRSRLATLNEKLTALERRIEYIEARVTKGE) form a coiled coil.

It belongs to the BRK1 family.

It is found in the cytoplasm. Its subcellular location is the cytoskeleton. Involved in regulation of actin and microtubule organization. Part of a WAVE complex that activates the Arp2/3 complex. The sequence is that of Probable protein BRICK1-A (brk1-a) from Xenopus laevis (African clawed frog).